The sequence spans 300 residues: MAEEVSTLMKATVLMRQPGRVQEIVGALRKGGGDRLQVISDFDMTLSRFAYNGKRCPSSYNILDNSKIISEECRKELTALLHHYYPIEIDPHRTVKEKLPHMVEWWTKAHNLLCQQKIQKFQIAQVVRESNAMLREGYKTFFNTLYHNNIPLFIFSAGIGDILEEIIRQMKVFHPNIHIVSNYMDFNEDGFLQGFKGQLIHTYNKNSSACENSGYFQQLEGKTNVILLGDSIGDLTMADGVPGVQNILKIGFLNDKVEERRERYMDSYDIVLEKDETLDVVNGLLQHILCQGVQLEMQGP.

The active-site Nucleophile is Asp41. Mg(2+) is bound by residues Asp41 and Asp43. Asp43 (proton donor) is an active-site residue. Glu88 contacts CMP. Glu88 lines the N(7)-methyl-GMP pocket. Substrate contacts are provided by residues 156–157 and Lys205; that span reads SA. A Mg(2+)-binding site is contributed by Asp230. Position 256 is an N6-acetyllysine (Lys256).

It belongs to the pyrimidine 5'-nucleotidase family. In terms of assembly, monomer.

The protein resides in the cytoplasm. The catalysed reaction is N(7)-methyl-GMP + H2O = N(7)-methylguanosine + phosphate. It catalyses the reaction CMP + H2O = cytidine + phosphate. It carries out the reaction a ribonucleoside 5'-phosphate + H2O = a ribonucleoside + phosphate. Specifically hydrolyzes 7-methylguanosine monophosphate (m(7)GMP) to 7-methylguanosine and inorganic phosphate. The specific activity for m(7)GMP may protect cells against undesired salvage of m(7)GMP and its incorporation into nucleic acids. Also has weak activity for CMP. UMP and purine nucleotides are poor substrates. This chain is 7-methylguanosine phosphate-specific 5'-nucleotidase (NT5C3B), found in Homo sapiens (Human).